A 586-amino-acid chain; its full sequence is Major facilitator superfamily domain-containing protein 6-like (586 aa).

2 helical membrane passes run 50-70 (ILMG…AFLA) and 78-98 (MFLT…VLVP). The disordered stretch occupies residues 218 to 237 (GPVNLSKPQGDTQTPDHSSK). Residues 223–237 (SKPQGDTQTPDHSSK) are compositionally biased toward polar residues. The next 9 membrane-spanning stretches (helical) occupy residues 240 to 260 (PWTF…AAPL), 284 to 304 (LWVW…ALVG), 318 to 338 (VIYF…STAF), 365 to 385 (LILL…VQDF), 397 to 417 (ELVM…FHPF), 428 to 448 (VGVL…YAFI), 454 to 474 (VLPV…AVGA), 494 to 514 (GHFY…VVLH), and 519 to 538 (VLYE…FLSI).

It belongs to the major facilitator superfamily. MFSD6 family.

It is found in the membrane. In Mus musculus (Mouse), this protein is Major facilitator superfamily domain-containing protein 6-like (Mfsd6l).